Reading from the N-terminus, the 313-residue chain is Proline iminopeptidase (313 aa).

Residues 35–298 enclose the AB hydrolase-1 domain; that stretch reads KPVVILHGGP…TPGAGHSAFE (264 aa). S110 (nucleophile) is an active-site residue. The active site involves D266. Residue H294 is the Proton donor of the active site.

It belongs to the peptidase S33 family.

It localises to the cytoplasm. The catalysed reaction is Release of N-terminal proline from a peptide.. Specifically catalyzes the removal of N-terminal proline residues from peptides. The polypeptide is Proline iminopeptidase (pip) (Xylella fastidiosa (strain Temecula1 / ATCC 700964)).